Consider the following 29-residue polypeptide: Bacteriocin (29 aa).

It localises to the secreted. Functionally, has antibacterial activity against strains of L.monocytogenes, L.lactis, B.subtilis, S.typhi, S.aureus, C.perfringens, E.aerogenes and M.luteus but not against E.coli, S.sonnei, S.pneumoniae, S.faecalis, P.aeruginosa, K.pneumoniae or P.vulgaris. This chain is Bacteriocin, found in Lactococcus lactis subsp. lactis (Streptococcus lactis).